Consider the following 401-residue polypeptide: O-methyltransferase SAT18 (401 aa).

Asp-249 lines the S-adenosyl-L-methionine pocket. The active-site Proton acceptor is His-300.

The protein belongs to the class I-like SAM-binding methyltransferase superfamily. Cation-independent O-methyltransferase family.

It functions in the pathway mycotoxin biosynthesis. Its function is as follows. O-methyltransferase; part of the satratoxin SC3 cluster involved in the biosynthesis of satratoxins, trichothecene mycotoxins that are associated with human food poisonings. Satratoxins are suggested to be made by products of multiple gene clusters (SC1, SC2 and SC3) that encode 21 proteins in all, including polyketide synthases, acetyltransferases, and other enzymes expected to modify the trichothecene skeleton. SC1 encodes 10 proteins, SAT1 to SAT10. The largest are SAT8, which encodes a putative polyketide synthase (PKS) with a conventional non-reducing architecture, and SAT10, a putative protein containing four ankyrin repeats and thus may be involved in protein scaffolding. The putative short-chain reductase SAT3 may assist the PKS in some capacity. SAT6 contains a secretory lipase domain and acts probably as a trichothecene esterase. SAT5 encodes a putative acetyltransferase, and so, with SAT6, may affect endogenous protection from toxicity. The probable transcription factor SAT9 may regulate the expression of the SC1 cluster. SC2 encodes proteins SAT11 to SAT16, the largest of which encodes the putative reducing PKS SAT13. SAT11 is a cytochrome P450 monooxygenase, while SAT14 and SAT16 are probable acetyltransferases. The SC2 cluster may be regulated by the transcription factor SAT15. SC3 is a small cluster that encodes 5 proteins, SAT17 to SAT21. SAT21 is a putative MFS-type transporter which may have a role in exporting secondary metabolites. The four other proteins putatively encoded in SC3 include the taurine hydroxylase-like protein SAT17, the O-methyltransferase SAT18, the acetyltransferase SAT19, and the Cys6-type zinc finger SAT20, the latter being probably involved in regulation of SC3 expression. This Stachybotrys chartarum (strain CBS 109288 / IBT 7711) (Toxic black mold) protein is O-methyltransferase SAT18.